The primary structure comprises 101 residues: Movement protein (101 aa).

Residues 30–50 (EVAILSFVALICFYLLYLWVL) form a helical membrane-spanning segment. A disordered region spans residues 75–101 (VDRSNPIPNLPAPPSQGNPGPFVPGTG).

It belongs to the mastrevirus movement protein family. Interacts with the capsid protein (CP). Part of a MP-CP-viral DNA complex.

Its subcellular location is the host membrane. Its function is as follows. Involved in the viral transport within, and between cells. This chain is Movement protein, found in Maize streak virus genotype A (isolate South Africa) (MSV).